Reading from the N-terminus, the 475-residue chain is MKIIQAAVEFAPFIKAGGLGDAVYSLSKALSASHDVEVLLPFYPCIFPTVSSQVIDEKVFAYEFLGRQHASSISYSYEGMILTVITLDSQLELFSTSTIYTQDDTLRFSAFSAAAAAYIQKLNHVDIVHMHDWHTGLLPGLLKEPNRQHYPKRIFTIHNFSYRGYCSTQLLGASGISEFGLSNYQLFRDPQVSVLLKGALYCSDYITTVSPTYAQDILHDYSDYEMHDAIMARRHVFRGILNGIDDNIWNPETDSSLVANYGKNLLDSPEILFTKKEENKVALYEKLGMSPEHSPLLCIISRIVEQKGPEFMKAAILHAMENGYAFILVGKCYDEETQRKFSNLQESLTMSPNVRIILDYNEPLARLLYGAADMLCIPSHFEPCGLTQLIGMRYGTVPLARATGGLADTVTPGINGFTFSHADNFNDFFRMLSQAVTTYRHEPDVWFQLVEEGMLRSSGLSTMAMHYLEIYNSLL.

ADP-alpha-D-glucose is bound at residue K15.

It belongs to the glycosyltransferase 1 family. Bacterial/plant glycogen synthase subfamily.

It carries out the reaction [(1-&gt;4)-alpha-D-glucosyl](n) + ADP-alpha-D-glucose = [(1-&gt;4)-alpha-D-glucosyl](n+1) + ADP + H(+). It participates in glycan biosynthesis; glycogen biosynthesis. Its function is as follows. Synthesizes alpha-1,4-glucan chains using ADP-glucose. The protein is Glycogen synthase of Chlamydia felis (strain Fe/C-56) (Chlamydophila felis).